The primary structure comprises 151 residues: UPF0178 protein GSU0171 (151 aa).

Belongs to the UPF0178 family.

This is UPF0178 protein GSU0171 from Geobacter sulfurreducens (strain ATCC 51573 / DSM 12127 / PCA).